A 1230-amino-acid polypeptide reads, in one-letter code: ATP-dependent helicase/nuclease subunit A (1230 aa).

The 477-residue stretch at 4 to 480 (RNWTGPQEAA…IDLSHNFRSR (477 aa)) folds into the UvrD-like helicase ATP-binding domain. 25–32 (AGAGSGKT) contacts ATP. A UvrD-like helicase C-terminal domain is found at 517–799 (AQLEGSGPPV…RIMSIHQAKG (283 aa)). A disordered region spans residues 535-554 (TSVGRDTAGTADDEPDRSDE). A compositionally biased stretch (acidic residues) spans 545 to 554 (ADDEPDRSDE).

Belongs to the helicase family. AddA subfamily. Heterodimer of AddA and AddB/RexB. The cofactor is Mg(2+).

The catalysed reaction is Couples ATP hydrolysis with the unwinding of duplex DNA by translocating in the 3'-5' direction.. It carries out the reaction ATP + H2O = ADP + phosphate + H(+). The heterodimer acts as both an ATP-dependent DNA helicase and an ATP-dependent, dual-direction single-stranded exonuclease. Recognizes the chi site generating a DNA molecule suitable for the initiation of homologous recombination. The AddA nuclease domain is required for chi fragment generation; this subunit has the helicase and 3' -&gt; 5' nuclease activities. The chain is ATP-dependent helicase/nuclease subunit A from Desulforudis audaxviator (strain MP104C).